The sequence spans 180 residues: uncharacterized protein (180 aa).

Residues 1-22 form the signal peptide; the sequence is MKRSIIAAAVFSSFFMSAGVFA.

The protein belongs to the fimbrial protein family.

Its function is as follows. Part of the yehABCD fimbrial operon. Could contribute to adhesion to various surfaces in specific environmental niches. This is an uncharacterized protein from Escherichia coli (strain K12).